The sequence spans 254 residues: MERLEEARKRLEEARRVAVLTGAGISKPSGIPTFRDAEGLWKNFNPLDYATPEAYARDPEKVWAWYAWRIQKVREAKPNPAHYALVELERRILSRGGSFLLVTQNVDGLHALAGSQNLVELHGNLLRARCEACGKRFPLPEAFAPPPFCPACGHRARPDVVWFGEFLPEGAWERAERAFAEADFALVVGTSAEVEPAASLGRIAFASGAYLVEVNPEPTPLTPLAHLSLRTGAVEGMALLLPPSPEDQAEGHLS.

A Deacetylase sirtuin-type domain is found at 1–250 (MERLEEARKR…LPPSPEDQAE (250 aa)). 22 to 41 (GAGISKPSGIPTFRDAEGLW) contacts NAD(+). Residues Tyr-66 and Arg-69 each contribute to the substrate site. 104–107 (QNVD) contacts NAD(+). His-122 acts as the Proton acceptor in catalysis. Residues Cys-130, Cys-133, Cys-149, and Cys-152 each coordinate Zn(2+). Residues 189-191 (GTS), 215-217 (NPE), and Ala-233 each bind NAD(+).

Belongs to the sirtuin family. Class III subfamily. It depends on Zn(2+) as a cofactor.

The protein localises to the cytoplasm. It carries out the reaction N(6)-acetyl-L-lysyl-[protein] + NAD(+) + H2O = 2''-O-acetyl-ADP-D-ribose + nicotinamide + L-lysyl-[protein]. The catalysed reaction is N(6)-succinyl-L-lysyl-[protein] + NAD(+) + H2O = 2''-O-succinyl-ADP-D-ribose + nicotinamide + L-lysyl-[protein]. Its function is as follows. NAD-dependent lysine deacetylase and desuccinylase that specifically removes acetyl and succinyl groups on target proteins. Modulates the activities of several proteins which are inactive in their acylated form. The sequence is that of NAD-dependent protein deacylase from Thermus thermophilus (strain ATCC 27634 / DSM 579 / HB8).